Here is a 312-residue protein sequence, read N- to C-terminus: D-apiose import binding protein (312 aa).

The N-terminal stretch at 1 to 26 (MKASKRWVALAAATLTLFTATGTAQA) is a signal peptide. D-apiofuranose contacts are provided by residues Asn-39, 115-116 (DR), 162-164 (DIN), Arg-168, Asn-218, Asp-243, and Gln-263.

The protein belongs to the bacterial solute-binding protein 2 family.

The protein resides in the periplasm. Functionally, part of an ABC transporter complex involved in D-apiose import. Binds D-apiose, D-ribose and D-ribulose. The sequence is that of D-apiose import binding protein from Paraburkholderia graminis (strain ATCC 700544 / DSM 17151 / LMG 18924 / NCIMB 13744 / C4D1M).